A 443-amino-acid polypeptide reads, in one-letter code: Tol-Pal system protein TolB (443 aa).

The N-terminal stretch at 1–33 is a signal peptide; the sequence is MKIGIINTKIRTVFSAFACMIAASLVCTMPARA.

Belongs to the TolB family. In terms of assembly, the Tol-Pal system is composed of five core proteins: the inner membrane proteins TolA, TolQ and TolR, the periplasmic protein TolB and the outer membrane protein Pal. They form a network linking the inner and outer membranes and the peptidoglycan layer.

It localises to the periplasm. Part of the Tol-Pal system, which plays a role in outer membrane invagination during cell division and is important for maintaining outer membrane integrity. The sequence is that of Tol-Pal system protein TolB from Brucella suis biovar 1 (strain 1330).